Consider the following 289-residue polypeptide: Shikimate kinase (289 aa).

84 to 94 (PVASGLSSSSA) is a binding site for ATP.

It belongs to the GHMP kinase family. Archaeal shikimate kinase subfamily.

Its subcellular location is the cytoplasm. The catalysed reaction is shikimate + ATP = 3-phosphoshikimate + ADP + H(+). The protein operates within metabolic intermediate biosynthesis; chorismate biosynthesis; chorismate from D-erythrose 4-phosphate and phosphoenolpyruvate: step 5/7. This is Shikimate kinase (aroK) from Methanothermobacter thermautotrophicus (strain ATCC 29096 / DSM 1053 / JCM 10044 / NBRC 100330 / Delta H) (Methanobacterium thermoautotrophicum).